The primary structure comprises 166 residues: Putative pre-16S rRNA nuclease (166 aa).

This sequence belongs to the YqgF nuclease family.

Its subcellular location is the cytoplasm. Could be a nuclease involved in processing of the 5'-end of pre-16S rRNA. In Mesorhizobium japonicum (strain LMG 29417 / CECT 9101 / MAFF 303099) (Mesorhizobium loti (strain MAFF 303099)), this protein is Putative pre-16S rRNA nuclease.